A 597-amino-acid polypeptide reads, in one-letter code: Glutamine--fructose-6-phosphate aminotransferase [isomerizing] (597 aa).

The active-site Nucleophile; for GATase activity is cysteine 2. The 217-residue stretch at 2–218 folds into the Glutamine amidotransferase type-2 domain; it reads CGIVGYIGDS…ENSVGQISLE (217 aa). 2 consecutive SIS domains span residues 276-416 and 449-587; these read IDPE…QLGT and LSKR…VDHP. Residue lysine 592 is the For Fru-6P isomerization activity of the active site.

As to quaternary structure, homodimer.

The protein localises to the cytoplasm. The enzyme catalyses D-fructose 6-phosphate + L-glutamine = D-glucosamine 6-phosphate + L-glutamate. Functionally, catalyzes the first step in hexosamine metabolism, converting fructose-6P into glucosamine-6P using glutamine as a nitrogen source. The chain is Glutamine--fructose-6-phosphate aminotransferase [isomerizing] from Helicobacter pylori (strain J99 / ATCC 700824) (Campylobacter pylori J99).